Consider the following 395-residue polypeptide: Acetate kinase 2 (395 aa).

N8 is a Mg(2+) binding site. An ATP-binding site is contributed by K15. R89 lines the substrate pocket. D146 functions as the Proton donor/acceptor in the catalytic mechanism. Residues 206–210 (HIGNG), 283–285 (DMR), and 331–335 (GVGEN) contribute to the ATP site. E383 contributes to the Mg(2+) binding site.

This sequence belongs to the acetokinase family. As to quaternary structure, homodimer. Mg(2+) is required as a cofactor. Mn(2+) serves as cofactor.

It is found in the cytoplasm. It carries out the reaction acetate + ATP = acetyl phosphate + ADP. Its pathway is metabolic intermediate biosynthesis; acetyl-CoA biosynthesis; acetyl-CoA from acetate: step 1/2. Its function is as follows. Catalyzes the formation of acetyl phosphate from acetate and ATP. Can also catalyze the reverse reaction. The chain is Acetate kinase 2 from Lactococcus lactis subsp. lactis (strain IL1403) (Streptococcus lactis).